The following is a 140-amino-acid chain: NADH-quinone oxidoreductase subunit I (140 aa).

2 consecutive 4Fe-4S ferredoxin-type domains span residues 42-71 and 81-110; these read GSFT…VGSI and ASYE…FNQE. [4Fe-4S] cluster-binding residues include C51, C54, C57, C61, C90, C93, C96, and C100.

This sequence belongs to the complex I 23 kDa subunit family. In terms of assembly, NDH-1 is composed of 14 different subunits. Subunits NuoA, H, J, K, L, M, N constitute the membrane sector of the complex. It depends on [4Fe-4S] cluster as a cofactor.

The protein resides in the cell membrane. The enzyme catalyses a quinone + NADH + 5 H(+)(in) = a quinol + NAD(+) + 4 H(+)(out). NDH-1 shuttles electrons from NADH, via FMN and iron-sulfur (Fe-S) centers, to quinones in the respiratory chain. The immediate electron acceptor for the enzyme in this species is believed to be ubiquinone. Couples the redox reaction to proton translocation (for every two electrons transferred, four hydrogen ions are translocated across the cytoplasmic membrane), and thus conserves the redox energy in a proton gradient. The sequence is that of NADH-quinone oxidoreductase subunit I from Carboxydothermus hydrogenoformans (strain ATCC BAA-161 / DSM 6008 / Z-2901).